The following is a 120-amino-acid chain: Ribonuclease P protein component (120 aa).

It belongs to the RnpA family. As to quaternary structure, consists of a catalytic RNA component (M1 or rnpB) and a protein subunit.

The enzyme catalyses Endonucleolytic cleavage of RNA, removing 5'-extranucleotides from tRNA precursor.. Functionally, RNaseP catalyzes the removal of the 5'-leader sequence from pre-tRNA to produce the mature 5'-terminus. It can also cleave other RNA substrates such as 4.5S RNA. The protein component plays an auxiliary but essential role in vivo by binding to the 5'-leader sequence and broadening the substrate specificity of the ribozyme. In Thioalkalivibrio sulfidiphilus (strain HL-EbGR7), this protein is Ribonuclease P protein component.